The primary structure comprises 426 residues: Gamma-glutamyl phosphate reductase (426 aa).

This sequence belongs to the gamma-glutamyl phosphate reductase family.

The protein resides in the cytoplasm. The catalysed reaction is L-glutamate 5-semialdehyde + phosphate + NADP(+) = L-glutamyl 5-phosphate + NADPH + H(+). It functions in the pathway amino-acid biosynthesis; L-proline biosynthesis; L-glutamate 5-semialdehyde from L-glutamate: step 2/2. Its function is as follows. Catalyzes the NADPH-dependent reduction of L-glutamate 5-phosphate into L-glutamate 5-semialdehyde and phosphate. The product spontaneously undergoes cyclization to form 1-pyrroline-5-carboxylate. The sequence is that of Gamma-glutamyl phosphate reductase from Deinococcus geothermalis (strain DSM 11300 / CIP 105573 / AG-3a).